The primary structure comprises 173 residues: UPF0316 protein Bsph_0745 (173 aa).

3 helical membrane-spanning segments follow: residues 4–24, 31–51, and 58–78; these read IVLI…RTIF, FLAA…LSLV, and MLAM…GAKI.

The protein belongs to the UPF0316 family.

The protein resides in the cell membrane. The sequence is that of UPF0316 protein Bsph_0745 from Lysinibacillus sphaericus (strain C3-41).